The chain runs to 239 residues: Fatty acid metabolism regulator protein (239 aa).

An HTH gntR-type domain is found at 6–74; that stretch reads QSPAGFAEEY…HGKPTQVNNF (69 aa). The segment at residues 34 to 53 is a DNA-binding region (H-T-H motif); sequence ERELSELIGVTRTTLREVLQ.

In terms of assembly, homodimer.

The protein resides in the cytoplasm. Its function is as follows. Multifunctional regulator of fatty acid metabolism. The sequence is that of Fatty acid metabolism regulator protein from Edwardsiella ictaluri (strain 93-146).